Reading from the N-terminus, the 60-residue chain is Large ribosomal subunit protein bL32 (60 aa).

Positions 1 to 23 are enriched in basic residues; sequence MAKHPVPKKKTSKARRDARRSHH. The interval 1-28 is disordered; sequence MAKHPVPKKKTSKARRDARRSHHALTPP.

This sequence belongs to the bacterial ribosomal protein bL32 family. In terms of assembly, part of the 50S ribosomal subunit.

Its function is as follows. Found on the solvent side of the large subunit. This is Large ribosomal subunit protein bL32 (rpmF) from Thermus thermophilus (strain ATCC BAA-163 / DSM 7039 / HB27).